Here is a 463-residue protein sequence, read N- to C-terminus: ATP-dependent protease ATPase subunit HslU (463 aa).

Residues Ile19 and 61 to 66 (GVGKTE) contribute to the ATP site. The interval 154–175 (FGGNQNSNQTSDAQEDDEIEKK) is disordered. Positions 156–165 (GNQNSNQTSD) are enriched in polar residues. Positions 277, 341, and 413 each coordinate ATP.

It belongs to the ClpX chaperone family. HslU subfamily. In terms of assembly, a double ring-shaped homohexamer of HslV is capped on each side by a ring-shaped HslU homohexamer. The assembly of the HslU/HslV complex is dependent on binding of ATP.

It localises to the cytoplasm. ATPase subunit of a proteasome-like degradation complex; this subunit has chaperone activity. The binding of ATP and its subsequent hydrolysis by HslU are essential for unfolding of protein substrates subsequently hydrolyzed by HslV. HslU recognizes the N-terminal part of its protein substrates and unfolds these before they are guided to HslV for hydrolysis. The sequence is that of ATP-dependent protease ATPase subunit HslU from Bacillus mycoides (strain KBAB4) (Bacillus weihenstephanensis).